Here is a 137-residue protein sequence, read N- to C-terminus: Small ribosomal subunit protein uS9 (137 aa).

Positions 104–137 (PLKSEGYLTRDPRAKERKKYGLHKARKAPQYSKR) are disordered. The segment covering 118 to 137 (KERKKYGLHKARKAPQYSKR) has biased composition (basic residues).

The protein belongs to the universal ribosomal protein uS9 family.

The chain is Small ribosomal subunit protein uS9 from Gloeothece citriformis (strain PCC 7424) (Cyanothece sp. (strain PCC 7424)).